The following is a 579-amino-acid chain: Trehalase (579 aa).

The N-terminal stretch at 1-15 is a signal peptide; that stretch reads MRLFLLLVGLTTVIA. 2 N-linked (GlcNAc...) asparagine glycosylation sites follow: N29 and N58. Residues R161, 168–169, N205, 214–216, 279–281, and G313 each bind substrate; these read WD, RSQ, and RPE. N205 carries an N-linked (GlcNAc...) asparagine glycan. D315 (proton donor/acceptor) is an active-site residue. Residue N331 is glycosylated (N-linked (GlcNAc...) asparagine). Residue E513 is the Proton donor/acceptor of the active site. E528 contacts substrate. The segment covering 560-569 has biased composition (polar residues); that stretch reads DASANNGQSN. The tract at residues 560–579 is disordered; that stretch reads DASANNGQSNEESETDSKEK.

The protein belongs to the glycosyl hydrolase 37 family. As to expression, in midgut and Malpighian tubules.

It is found in the basolateral cell membrane. It carries out the reaction alpha,alpha-trehalose + H2O = alpha-D-glucose + beta-D-glucose. In terms of biological role, involved in uptake of hemolymph trehalose into epithelial cells in the midgut of feeding larvae. The chain is Trehalase from Bombyx mori (Silk moth).